A 479-amino-acid polypeptide reads, in one-letter code: Replication factor C large subunit (479 aa).

ATP is bound at residue 50–57 (GPPGSGKT). Residues 420–468 (EKIRKERKEEEKVEVREEKPEEKVEEKREERETKKEKEKKEEKKAEKKG) show a composition bias toward basic and acidic residues. The disordered stretch occupies residues 420–479 (EKIRKERKEEEKVEVREEKPEEKVEEKREERETKKEKEKKEEKKAEKKGKQVTLFDFIKK).

Belongs to the activator 1 small subunits family. RfcL subfamily. In terms of assembly, heterohexamer composed of four small subunits (RfcS) and two large subunits (RfcL).

Part of the RFC clamp loader complex which loads the PCNA sliding clamp onto DNA. The complex possesses DNA-independent ATPase activity. This Pyrococcus abyssi (strain GE5 / Orsay) protein is Replication factor C large subunit (rfcL).